The following is a 421-amino-acid chain: Gamma-glutamyl phosphate reductase (421 aa).

Belongs to the gamma-glutamyl phosphate reductase family.

Its subcellular location is the cytoplasm. It catalyses the reaction L-glutamate 5-semialdehyde + phosphate + NADP(+) = L-glutamyl 5-phosphate + NADPH + H(+). It functions in the pathway amino-acid biosynthesis; L-proline biosynthesis; L-glutamate 5-semialdehyde from L-glutamate: step 2/2. Catalyzes the NADPH-dependent reduction of L-glutamate 5-phosphate into L-glutamate 5-semialdehyde and phosphate. The product spontaneously undergoes cyclization to form 1-pyrroline-5-carboxylate. In Erythrobacter litoralis (strain HTCC2594), this protein is Gamma-glutamyl phosphate reductase.